A 123-amino-acid chain; its full sequence is Fluoride-specific ion channel FluC 2 (123 aa).

The next 2 membrane-spanning stretches (helical) occupy residues 1–21 and 30–50; these read MTML…FLLD and VPVP…LGLI. Positions 74 and 77 each coordinate Na(+). Residues 99-119 form a helical membrane-spanning segment; the sequence is ALHCMGMAIAGVLAAILGLAL.

It belongs to the fluoride channel Fluc/FEX (TC 1.A.43) family.

It is found in the cell membrane. The enzyme catalyses fluoride(in) = fluoride(out). Its activity is regulated as follows. Na(+) is not transported, but it plays an essential structural role and its presence is essential for fluoride channel function. In terms of biological role, fluoride-specific ion channel. Important for reducing fluoride concentration in the cell, thus reducing its toxicity. The protein is Fluoride-specific ion channel FluC 2 of Cutibacterium acnes (strain DSM 16379 / KPA171202) (Propionibacterium acnes).